The chain runs to 60 residues: Large ribosomal subunit protein uL30 (60 aa).

This sequence belongs to the universal ribosomal protein uL30 family. Part of the 50S ribosomal subunit.

This is Large ribosomal subunit protein uL30 from Bacillus anthracis (strain A0248).